The following is a 499-amino-acid chain: Hepatic triacylglycerol lipase (499 aa).

Residues 1–21 (MGSPLCVPIFLAVCILIQSST) form the signal peptide. A glycan (N-linked (GlcNAc...) asparagine) is linked at N78. Residue S168 is the Nucleophile of the active site. Residue D194 is the Charge relay system of the active site. Residues 254-277 (CHFLELYKHIAQHGLNALSQTIKC) are essential for determining substrate specificity. Residue H279 is the Charge relay system of the active site. The region spanning 352–486 (YHYQFKIQFI…HPTQEKNFVR (135 aa)) is the PLAT domain. A glycan (N-linked (GlcNAc...) asparagine) is linked at N397.

This sequence belongs to the AB hydrolase superfamily. Lipase family. As to quaternary structure, homodimer.

It localises to the secreted. The catalysed reaction is a triacylglycerol + H2O = a diacylglycerol + a fatty acid + H(+). It catalyses the reaction a 1-acyl-sn-glycero-3-phosphocholine + H2O = sn-glycerol 3-phosphocholine + a fatty acid + H(+). The enzyme catalyses a 1,2-diacyl-sn-glycero-3-phosphocholine + H2O = a 2-acyl-sn-glycero-3-phosphocholine + a fatty acid + H(+). It carries out the reaction 1,2,3-tri-(9Z-octadecenoyl)-glycerol + H2O = di-(9Z)-octadecenoylglycerol + (9Z)-octadecenoate + H(+). The catalysed reaction is 1,2-di-(9Z-octadecenoyl)-sn-glycero-3-phosphocholine + H2O = (9Z-octadecenoyl)-sn-glycero-3-phosphocholine + (9Z)-octadecenoate + H(+). It catalyses the reaction 1,2,3-tributanoylglycerol + H2O = dibutanoylglycerol + butanoate + H(+). The enzyme catalyses 1,2-dihexadecanoyl-sn-glycero-3-phosphocholine + H2O = hexadecanoyl-sn-glycero-3-phosphocholine + hexadecanoate + H(+). It carries out the reaction 1,2-di-(9Z-octadecenoyl)-sn-glycerol + H2O = 2-(9Z-octadecenoyl)-glycerol + (9Z)-octadecenoate + H(+). The catalysed reaction is 1,2,3-tri-(9Z-octadecenoyl)-glycerol + H2O = 2,3-di-(9Z)-octadecenoyl-sn-glycerol + (9Z)-octadecenoate + H(+). It catalyses the reaction 1-(9Z-octadecenoyl)-sn-glycero-3-phospho-L-serine + H2O = sn-glycero-3-phospho-L-serine + (9Z)-octadecenoate + H(+). The enzyme catalyses 1-hexadecanoyl-sn-glycero-3-phosphocholine + H2O = sn-glycerol 3-phosphocholine + hexadecanoate + H(+). It carries out the reaction 1,3-di-(9Z-octadecenoyl)-glycerol + H2O = 3-(9Z-octadecenoyl)-sn-glycerol + (9Z)-octadecenoate + H(+). In terms of biological role, catalyzes the hydrolysis of triglycerides and phospholipids present in circulating plasma lipoproteins, including chylomicrons, intermediate density lipoproteins (IDL), low density lipoproteins (LDL) of large size and high density lipoproteins (HDL), releasing free fatty acids (FFA) and smaller lipoprotein particles. Also exhibits lysophospholipase activity. Can hydrolyze both neutral lipid and phospholipid substrates but shows a greater binding affinity for neutral lipid substrates than phospholipid substrates. In native LDL, preferentially hydrolyzes the phosphatidylcholine species containing polyunsaturated fatty acids at sn-2 position. This is Hepatic triacylglycerol lipase (LIPC) from Oryctolagus cuniculus (Rabbit).